Reading from the N-terminus, the 325-residue chain is MLLPEEPAILEVRHAVRHWIAAHAPDGDVAVALSGGADSLALTAAAAVEARSAVALVVDHRLQRGSADVADGAAARARTLGCASAEVLPVDVTGSGGLEAAARQARYEALDAGRGTRPVLLGHTLDDQAETVLLGLSRGSGGRSIWGMSPYDSPWGRPLLGVRRAVTRQACTELGLDPHEDPHNSSPDFVRVRLRTEVLPLLEDVLGGGVAGALARTGEHLREEGAVLDAVAADAEAKVVVDGEIDAALLALSAPPVRRRVLRSWLLAAGARGLGDTQLRAVDDLVARWRGQGQVAVGGGTPDARLVVRRRRGRLNVGLDDRRRV.

34–39 (SGGADS) lines the ATP pocket.

This sequence belongs to the tRNA(Ile)-lysidine synthase family.

Its subcellular location is the cytoplasm. It carries out the reaction cytidine(34) in tRNA(Ile2) + L-lysine + ATP = lysidine(34) in tRNA(Ile2) + AMP + diphosphate + H(+). In terms of biological role, ligates lysine onto the cytidine present at position 34 of the AUA codon-specific tRNA(Ile) that contains the anticodon CAU, in an ATP-dependent manner. Cytidine is converted to lysidine, thus changing the amino acid specificity of the tRNA from methionine to isoleucine. In Rhodococcus opacus (strain B4), this protein is tRNA(Ile)-lysidine synthase.